Reading from the N-terminus, the 311-residue chain is Methionyl-tRNA formyltransferase (311 aa).

114–117 (SLLP) is a binding site for (6S)-5,6,7,8-tetrahydrofolate.

Belongs to the Fmt family.

The enzyme catalyses L-methionyl-tRNA(fMet) + (6R)-10-formyltetrahydrofolate = N-formyl-L-methionyl-tRNA(fMet) + (6S)-5,6,7,8-tetrahydrofolate + H(+). In terms of biological role, attaches a formyl group to the free amino group of methionyl-tRNA(fMet). The formyl group appears to play a dual role in the initiator identity of N-formylmethionyl-tRNA by promoting its recognition by IF2 and preventing the misappropriation of this tRNA by the elongation apparatus. The protein is Methionyl-tRNA formyltransferase of Corynebacterium diphtheriae (strain ATCC 700971 / NCTC 13129 / Biotype gravis).